Here is a 269-residue protein sequence, read N- to C-terminus: Zinc transporter ZupT (269 aa).

The next 8 helical transmembrane spans lie at 11 to 31, 40 to 60, 80 to 100, 125 to 145, 158 to 178, 187 to 207, 217 to 237, and 249 to 269; these read IALA…LLVL, LLAF…LSEI, YGTL…HFIP, ALLT…ATFF, AFAI…PVYF, FSAS…GYWL, FGWV…DELL, and TVYG…LFKW. 2 residues coordinate Fe(2+): N136 and E139. Zn(2+) contacts are provided by E139 and H164. The Fe(2+) site is built by N165, E168, and E197. Residue E168 coordinates Zn(2+).

It belongs to the ZIP transporter (TC 2.A.5) family. ZupT subfamily.

The protein resides in the cell inner membrane. It catalyses the reaction Zn(2+)(in) = Zn(2+)(out). Mediates zinc uptake. May also transport other divalent cations. The polypeptide is Zinc transporter ZupT (Stenotrophomonas maltophilia (strain K279a)).